A 153-amino-acid chain; its full sequence is 3-hydroxyacyl-[acyl-carrier-protein] dehydratase FabZ (153 aa).

Histidine 57 is an active-site residue.

This sequence belongs to the thioester dehydratase family. FabZ subfamily.

Its subcellular location is the cytoplasm. The enzyme catalyses a (3R)-hydroxyacyl-[ACP] = a (2E)-enoyl-[ACP] + H2O. In terms of biological role, involved in unsaturated fatty acids biosynthesis. Catalyzes the dehydration of short chain beta-hydroxyacyl-ACPs and long chain saturated and unsaturated beta-hydroxyacyl-ACPs. In Xanthomonas campestris pv. campestris (strain 8004), this protein is 3-hydroxyacyl-[acyl-carrier-protein] dehydratase FabZ.